The sequence spans 74 residues: Small ribosomal subunit protein uS15 (74 aa).

The protein belongs to the universal ribosomal protein uS15 family. As to quaternary structure, part of the 30S ribosomal subunit. Forms a bridge to the 50S subunit in the 70S ribosome, contacting the 23S rRNA.

In terms of biological role, one of the primary rRNA binding proteins, it binds directly to 16S rRNA where it helps nucleate assembly of the platform of the 30S subunit by binding and bridging several RNA helices of the 16S rRNA. Its function is as follows. Forms an intersubunit bridge (bridge B4) with the 23S rRNA of the 50S subunit in the ribosome. This chain is Small ribosomal subunit protein uS15, found in Onion yellows phytoplasma (strain OY-M).